The following is a 200-amino-acid chain: MSKWAGIVLAGGMSSRFGEPKALASWQGSTFIEHILKLMTSALQEVVVISHSHIKERVEQLVQVPVIEDIPHYKGNGPLAGIVSGMEYIEADWYAIMPCDAPNVSHEWFTILLEQTSNNYDAVVPIINGRKQPLLAAYHNRVKEKIYALLQEEKRSMGQLLSQCNVKYIAGEDIQANADWFINVNTKEEYVQAQKDLSNE.

Residues 9–11, Lys21, Asp69, and Asp100 contribute to the GTP site; that span reads LAG. Asp100 provides a ligand contact to Mg(2+).

The protein belongs to the MobA family. Mg(2+) is required as a cofactor.

Its subcellular location is the cytoplasm. It catalyses the reaction Mo-molybdopterin + GTP + H(+) = Mo-molybdopterin guanine dinucleotide + diphosphate. In terms of biological role, transfers a GMP moiety from GTP to Mo-molybdopterin (Mo-MPT) cofactor (Moco or molybdenum cofactor) to form Mo-molybdopterin guanine dinucleotide (Mo-MGD) cofactor. This is Probable molybdenum cofactor guanylyltransferase from Bacillus cereus (strain Q1).